The chain runs to 357 residues: Protein RecA (357 aa).

69-76 (GPESSGKT) is a binding site for ATP. The tract at residues 337-357 (SANSVAKNNEDDEDEDVEEEE) is disordered. The span at 346–357 (EDDEDEDVEEEE) shows a compositional bias: acidic residues.

Belongs to the RecA family.

The protein resides in the cytoplasm. In terms of biological role, can catalyze the hydrolysis of ATP in the presence of single-stranded DNA, the ATP-dependent uptake of single-stranded DNA by duplex DNA, and the ATP-dependent hybridization of homologous single-stranded DNAs. It interacts with LexA causing its activation and leading to its autocatalytic cleavage. The protein is Protein RecA of Nostoc sp. (strain PCC 7120 / SAG 25.82 / UTEX 2576).